The following is a 263-amino-acid chain: uncharacterized protein (263 aa).

Belongs to the flavoredoxin family. It depends on FMN as a cofactor.

This is an uncharacterized protein from Aeropyrum pernix (strain ATCC 700893 / DSM 11879 / JCM 9820 / NBRC 100138 / K1).